The chain runs to 490 residues: ATP synthase subunit beta, chloroplastic (490 aa).

170-177 (GGAGVGKT) is a binding site for ATP.

Belongs to the ATPase alpha/beta chains family. In terms of assembly, F-type ATPases have 2 components, CF(1) - the catalytic core - and CF(0) - the membrane proton channel. CF(1) has five subunits: alpha(3), beta(3), gamma(1), delta(1), epsilon(1). CF(0) has four main subunits: a(1), b(1), b'(1) and c(9-12).

It localises to the plastid. It is found in the chloroplast thylakoid membrane. It carries out the reaction ATP + H2O + 4 H(+)(in) = ADP + phosphate + 5 H(+)(out). In terms of biological role, produces ATP from ADP in the presence of a proton gradient across the membrane. The catalytic sites are hosted primarily by the beta subunits. The chain is ATP synthase subunit beta, chloroplastic from Ipomoea obscura (Obscure morning glory).